The sequence spans 193 residues: Glycerol-3-phosphate acyltransferase (193 aa).

Helical transmembrane passes span 2-22 (AFII…AVIV), 51-71 (QAAF…VLIA), 78-98 (GVSL…PVYF), 112-132 (VLLG…VIVV), and 154-174 (IIAG…LLIW).

The protein belongs to the PlsY family. As to quaternary structure, probably interacts with PlsX.

The protein localises to the cell inner membrane. The catalysed reaction is an acyl phosphate + sn-glycerol 3-phosphate = a 1-acyl-sn-glycero-3-phosphate + phosphate. Its pathway is lipid metabolism; phospholipid metabolism. Its function is as follows. Catalyzes the transfer of an acyl group from acyl-phosphate (acyl-PO(4)) to glycerol-3-phosphate (G3P) to form lysophosphatidic acid (LPA). This enzyme utilizes acyl-phosphate as fatty acyl donor, but not acyl-CoA or acyl-ACP. The protein is Glycerol-3-phosphate acyltransferase of Coxiella burnetii (strain CbuG_Q212) (Coxiella burnetii (strain Q212)).